Reading from the N-terminus, the 520-residue chain is Sodium-dependent dicarboxylate transporter SdcS (520 aa).

14 helical membrane-spanning segments follow: residues 30–50 (AGQLIGLILGPLLFLLTLLFF), 55–75 (LPWKGVYVLAITLWIATWWIT), 77–97 (AIPIAATSLLPIVLLPLGHIL), 104–124 (SEYGNDIIFLFLGGFILAIAM), 160–180 (SMFVSNTAAVMIMIPIGLAII), 207–227 (IGYAGTIGGLGTLIGTPPLII), 242–262 (FAKWMIVGIPTVIVLLGITWL), 298–318 (KVVQTIFVLASLLWITREFLL), 323–343 (VTSSVADGTIAIFISILLFVI), 362–382 (ELPWGVLILFGGGLALAKGIS), 399–419 (GVSPILIVIVITIFVLFLTEV), 428–448 (MILPILATLSVAVGVHPLLLM), 452–472 (AMAANCAYMLPVGTPPNAIIF), and 491–511 (LISAIIIILVVYYVMPIVLGI).

This sequence belongs to the SLC13A/DASS transporter (TC 2.A.47) family. NADC subfamily.

It localises to the cell membrane. In terms of biological role, mediates the transport of the dicarboxylates fumarate, malate, and succinate across the cytoplasmic membrane via a Na(+)-electrochemical gradient. The sequence is that of Sodium-dependent dicarboxylate transporter SdcS (sdcS) from Staphylococcus aureus (strain MSSA476).